A 230-amino-acid polypeptide reads, in one-letter code: Octanoyltransferase (230 aa).

In terms of domain architecture, BPL/LPL catalytic spans 38-215 (AGGADTLLLL…AVCAALDGVL (178 aa)). Substrate-binding positions include 76 to 83 (RGGKITWH), 145 to 147 (AIG), and 158 to 160 (GFA). The Acyl-thioester intermediate role is filled by C176.

Belongs to the LipB family.

The protein localises to the cytoplasm. The catalysed reaction is octanoyl-[ACP] + L-lysyl-[protein] = N(6)-octanoyl-L-lysyl-[protein] + holo-[ACP] + H(+). The protein operates within protein modification; protein lipoylation via endogenous pathway; protein N(6)-(lipoyl)lysine from octanoyl-[acyl-carrier-protein]: step 1/2. Its function is as follows. Catalyzes the transfer of endogenously produced octanoic acid from octanoyl-acyl-carrier-protein onto the lipoyl domains of lipoate-dependent enzymes. Lipoyl-ACP can also act as a substrate although octanoyl-ACP is likely to be the physiological substrate. In Mycobacterium bovis (strain BCG / Tokyo 172 / ATCC 35737 / TMC 1019), this protein is Octanoyltransferase.